Reading from the N-terminus, the 280-residue chain is UPF0758 protein Atu1607 (280 aa).

The disordered stretch occupies residues 1–22 (MAKRPALPSADLSPTSGFEAGE). In terms of domain architecture, MPN spans 158–280 (VLGSWSSVID…HASFKGLRLI (123 aa)). Zn(2+)-binding residues include His229, His231, and Asp242. Positions 229-242 (HNHPSGDPTPSRAD) match the JAMM motif motif.

This sequence belongs to the UPF0758 family.

This is UPF0758 protein Atu1607 from Agrobacterium fabrum (strain C58 / ATCC 33970) (Agrobacterium tumefaciens (strain C58)).